Reading from the N-terminus, the 160-residue chain is Large ribosomal subunit protein eL21A (160 aa).

Residue K32 forms a Glycyl lysine isopeptide (Lys-Gly) (interchain with G-Cter in ubiquitin) linkage.

Belongs to the eukaryotic ribosomal protein eL21 family. In terms of assembly, component of the large ribosomal subunit (LSU). Mature yeast ribosomes consist of a small (40S) and a large (60S) subunit. The 40S small subunit contains 1 molecule of ribosomal RNA (18S rRNA) and 33 different proteins (encoded by 57 genes). The large 60S subunit contains 3 rRNA molecules (25S, 5.8S and 5S rRNA) and 46 different proteins (encoded by 81 genes).

The protein localises to the cytoplasm. Functionally, component of the ribosome, a large ribonucleoprotein complex responsible for the synthesis of proteins in the cell. The small ribosomal subunit (SSU) binds messenger RNAs (mRNAs) and translates the encoded message by selecting cognate aminoacyl-transfer RNA (tRNA) molecules. The large subunit (LSU) contains the ribosomal catalytic site termed the peptidyl transferase center (PTC), which catalyzes the formation of peptide bonds, thereby polymerizing the amino acids delivered by tRNAs into a polypeptide chain. The nascent polypeptides leave the ribosome through a tunnel in the LSU and interact with protein factors that function in enzymatic processing, targeting, and the membrane insertion of nascent chains at the exit of the ribosomal tunnel. The chain is Large ribosomal subunit protein eL21A from Saccharomyces cerevisiae (strain ATCC 204508 / S288c) (Baker's yeast).